We begin with the raw amino-acid sequence, 292 residues long: Acetyl-coenzyme A carboxylase carboxyl transferase subunit beta (292 aa).

In terms of domain architecture, CoA carboxyltransferase N-terminal spans 35–292 (VFSQCEQCNS…LKLHAKKVTS (258 aa)). Residues C39, C42, C58, and C61 each contribute to the Zn(2+) site. Residues 39-61 (CEQCNSAIYNKDLEHNYEVCPYC) form a C4-type zinc finger.

It belongs to the AccD/PCCB family. Acetyl-CoA carboxylase is a heterohexamer composed of biotin carboxyl carrier protein (AccB), biotin carboxylase (AccC) and two subunits each of ACCase subunit alpha (AccA) and ACCase subunit beta (AccD). Zn(2+) serves as cofactor.

It is found in the cytoplasm. It catalyses the reaction N(6)-carboxybiotinyl-L-lysyl-[protein] + acetyl-CoA = N(6)-biotinyl-L-lysyl-[protein] + malonyl-CoA. It functions in the pathway lipid metabolism; malonyl-CoA biosynthesis; malonyl-CoA from acetyl-CoA: step 1/1. In terms of biological role, component of the acetyl coenzyme A carboxylase (ACC) complex. Biotin carboxylase (BC) catalyzes the carboxylation of biotin on its carrier protein (BCCP) and then the CO(2) group is transferred by the transcarboxylase to acetyl-CoA to form malonyl-CoA. This chain is Acetyl-coenzyme A carboxylase carboxyl transferase subunit beta, found in Acholeplasma laidlawii (strain PG-8A).